The primary structure comprises 497 residues: tRNA-2-methylthio-N(6)-dimethylallyladenosine synthase (497 aa).

Residues 1–50 (MTGTSNIPTHGKEHKDAPALLPLPAPNPHHTHAAHPGDPSHDRPPSRGKL) are disordered. An MTTase N-terminal domain is found at 48–165 (GKLFIKTHGC…LPDMIRARRE (118 aa)). [4Fe-4S] cluster-binding residues include Cys57, Cys94, Cys128, Cys202, Cys206, and Cys209. The Radical SAM core domain occupies 188–430 (RAEGPSAFVS…QKHINAYAAD (243 aa)). A TRAM domain is found at 433–496 (KRMIGTVQTV…TNSLRGRVHT (64 aa)).

Belongs to the methylthiotransferase family. MiaB subfamily. Monomer. Requires [4Fe-4S] cluster as cofactor.

Its subcellular location is the cytoplasm. The enzyme catalyses N(6)-dimethylallyladenosine(37) in tRNA + (sulfur carrier)-SH + AH2 + 2 S-adenosyl-L-methionine = 2-methylsulfanyl-N(6)-dimethylallyladenosine(37) in tRNA + (sulfur carrier)-H + 5'-deoxyadenosine + L-methionine + A + S-adenosyl-L-homocysteine + 2 H(+). Functionally, catalyzes the methylthiolation of N6-(dimethylallyl)adenosine (i(6)A), leading to the formation of 2-methylthio-N6-(dimethylallyl)adenosine (ms(2)i(6)A) at position 37 in tRNAs that read codons beginning with uridine. The polypeptide is tRNA-2-methylthio-N(6)-dimethylallyladenosine synthase (Xylella fastidiosa (strain M12)).